The chain runs to 48 residues: Phospholipase A2 superbin d (48 aa).

Residues Y28, G30, and G32 each contribute to the Ca(2+) site. The cysteines at positions 29 and 45 are disulfide-linked. H48 is an active-site residue.

Requires Ca(2+) as cofactor. In terms of tissue distribution, expressed by the venom gland.

It is found in the secreted. The enzyme catalyses a 1,2-diacyl-sn-glycero-3-phosphocholine + H2O = a 1-acyl-sn-glycero-3-phosphocholine + a fatty acid + H(+). Snake venom phospholipase A2 (PLA2) that inhibits collagen-induced platelet aggregation. In terms of inhibition of platelet aggregation, superbin d is less potent as superbin a, b, and c. PLA2 catalyzes the calcium-dependent hydrolysis of the 2-acyl groups in 3-sn-phosphoglycerides. This is Phospholipase A2 superbin d from Austrelaps superbus (Lowland copperhead snake).